Consider the following 501-residue polypeptide: Cystine/glutamate transporter (501 aa).

Residues 1 to 43 (MVRKPVVSTISKGGYLQGNVNGRLPSLGNKEPPGQEKVQLKRK) lie on the Cytoplasmic side of the membrane. S26 is subject to Phosphoserine. A helical transmembrane segment spans residues 44–64 (VTLLRGVSIIIGTIIGAGIFI). The Extracellular portion of the chain corresponds to 65–74 (SPKGVLQNTG). A helical membrane pass occupies residues 75-95 (SVGMSLTIWTVCGVLSLFGAL). The Cytoplasmic portion of the chain corresponds to 96 to 101 (SYAELG). Residues 102–116 (TTIKKSGGHYTYILE) lie within the membrane without spanning it. Topologically, residues 117–130 (VFGPLPAFVRVWVE) are cytoplasmic. The helical transmembrane segment at 131–150 (LLIIRPAATAVISLAFGRYI) threads the bilayer. L-glutamate is bound at residue R135. The Extracellular segment spans residues 151 to 163 (LEPFFIQCEIPEL). The chain crosses the membrane as a helical span at residues 164–179 (AIKLITAVGITVVMVL). Topologically, residues 180 to 193 (NSMSVSWSARIQIF) are cytoplasmic. The helical transmembrane segment at 194–210 (LTFCKLTAILIIIVPGV) threads the bilayer. The Extracellular segment spans residues 211 to 234 (MQLIKGQTQNFKDAFSGRDSSITR). A helical membrane pass occupies residues 235–255 (LPLAFYYGMYAYAGWFYLNFV). L-glutamate is bound at residue Y244. The Cytoplasmic segment spans residues 256–265 (TEEVENPEKT). The chain crosses the membrane as a helical span at residues 266-286 (IPLAICISMAIVTIGYVLTNV). Residues 287–317 (AYFTTINAEELLLSNAVAVTFSERLLGNFSL) are Extracellular-facing. N314 is a glycosylation site (N-linked (GlcNAc...) asparagine). A helical membrane pass occupies residues 318–338 (AVPIFVALSCFGSMNGGVFAV). The Cytoplasmic portion of the chain corresponds to 339-364 (SRLFYVASREGHLPEILSMIHVRKHT). Residues 365–385 (PLPAVIVLHPLTMIMLFSGDL) form a helical membrane-spanning segment. Over 386–387 (DS) the chain is Extracellular. Residues 388–408 (LLNFLSFARWLFIGLAVAGLI) form a helical membrane-spanning segment. Over 409–422 (YLRYKCPDMHRPFK) the chain is Cytoplasmic. The helical transmembrane segment at 423–443 (VPLFIPALFSFTCLFMVALSL) threads the bilayer. Topologically, residues 444–449 (YSDPFS) are extracellular. Residues 450–470 (TGIGFVITLTGVPAYYLFIIW) form a helical membrane-spanning segment. At 471–501 (DKKPRWFRIMSEKITRTLQIILEVVPEEDKL) the chain is on the cytoplasmic side.

This sequence belongs to the amino acid-polyamine-organocation (APC) superfamily. L-type amino acid transporter (LAT) (TC 2.A.3.8) family. In terms of assembly, disulfide-linked heterodimer with the amino acid transport protein SLC3A2/4F2hc; this interaction mediates cell membrane localization. Post-translationally, ubiquitinated by TRIM26; leading to proteasomal degradation. Expressed in term placenta and primary term cytotrophoblast. Expressed mainly in the brain, but also in pancreas.

It is found in the cell membrane. It localises to the cell projection. Its subcellular location is the microvillus membrane. The catalysed reaction is L-cystine(out) + L-glutamate(in) = L-cystine(in) + L-glutamate(out). The enzyme catalyses an L-alpha-amino acid(in) + L-kynurenine(out) = an L-alpha-amino acid(out) + L-kynurenine(in). It catalyses the reaction N-acetyl-L-cysteine(out) + L-glutamate(in) = N-acetyl-L-cysteine(in) + L-glutamate(out). Inhibited by erastin and sulfasalazine. Inhibited by (S)-lactate. Inactivated by p-chloromercuribenzoic acid and p-chloromercuribenzenesulfonic acid. In terms of biological role, heterodimer with SLC3A2, that functions as an antiporter by mediating the exchange of extracellular anionic L-cystine and intracellular L-glutamate across the cellular plasma membrane. Provides L-cystine for the maintenance of the redox balance between extracellular L-cystine and L-cysteine and for the maintenance of the intracellular levels of glutathione that is essential for cells protection from oxidative stress. The transport is sodium-independent, electroneutral with a stoichiometry of 1:1, and is drove by the high intracellular concentration of L-glutamate and the intracellular reduction of L-cystine. In addition, mediates the import of L-kynurenine leading to anti-ferroptotic signaling propagation required to maintain L-cystine and glutathione homeostasis. Moreover, mediates N-acetyl-L-cysteine uptake into the placenta leading to subsequently down-regulation of pathways associated with oxidative stress, inflammation and apoptosis. In vitro can also transport L-aspartate. May participate in astrocyte and meningeal cell proliferation during development and can provide neuroprotection by promoting glutathione synthesis and delivery from non-neuronal cells such as astrocytes and meningeal cells to immature neurons. Controls the production of pheomelanin pigment directly. This Homo sapiens (Human) protein is Cystine/glutamate transporter.